We begin with the raw amino-acid sequence, 283 residues long: Phosphatidylglycerol--prolipoprotein diacylglyceryl transferase (283 aa).

7 helical membrane-spanning segments follow: residues 18-38 (LGGIEVHWYGLAYACAIVVAF), 62-82 (YFLWAELGIVLGARIGYVLIY), 106-126 (FIGIRGMSYHGGLVGFLIASY), 136-156 (LLIYLDLIAISLPLGYVFGRI), 190-210 (PSQLIEAFLEGVVVFLMVMWA), 218-238 (GLLIVVYGLGYSLMRFIAEFY), and 252-272 (LSMGQILSVFMVIVSLGILLY). Arg155 contacts a 1,2-diacyl-sn-glycero-3-phospho-(1'-sn-glycerol).

Belongs to the Lgt family.

It is found in the cell inner membrane. The catalysed reaction is L-cysteinyl-[prolipoprotein] + a 1,2-diacyl-sn-glycero-3-phospho-(1'-sn-glycerol) = an S-1,2-diacyl-sn-glyceryl-L-cysteinyl-[prolipoprotein] + sn-glycerol 1-phosphate + H(+). The protein operates within protein modification; lipoprotein biosynthesis (diacylglyceryl transfer). Catalyzes the transfer of the diacylglyceryl group from phosphatidylglycerol to the sulfhydryl group of the N-terminal cysteine of a prolipoprotein, the first step in the formation of mature lipoproteins. This Helicobacter pylori (strain J99 / ATCC 700824) (Campylobacter pylori J99) protein is Phosphatidylglycerol--prolipoprotein diacylglyceryl transferase.